A 159-amino-acid chain; its full sequence is UPF0699 transmembrane protein YdbS (159 aa).

2 helical membrane-spanning segments follow: residues 22–42 (IIIS…SYYF) and 47–67 (WISG…VFII).

The protein belongs to the UPF0699 family.

The protein resides in the cell membrane. This Bacillus subtilis (strain 168) protein is UPF0699 transmembrane protein YdbS (ydbS).